A 215-amino-acid chain; its full sequence is Ras-related protein Rab-14 (215 aa).

A2 carries the N-acetylalanine modification. GTP-binding residues include G21, V22, G23, K24, S25, C26, A38, D39, C40, H42, and T43. A Mg(2+)-binding site is contributed by S25. A Switch 1 motif is present at residues 42 to 47 (HTIGVE). Mg(2+) is bound by residues T43 and D66. The Switch 2 motif lies at 68–77 (AGQERFRAVT). GTP-binding residues include G69, N124, K125, D127, A155, and K156. Residues 188–215 (SGVQHKPSAPQGGRLTSEPQPQREGCGC) are disordered. S-geranylgeranyl cysteine attachment occurs at residues C213 and C215. C215 is modified (cysteine methyl ester).

The protein belongs to the small GTPase superfamily. Rab family. Interacts with ZFYVE20. Interacts with KIF16B. Interacts (GTP-bound form) with RUFY1; the interaction recruits RUFY1 onto endosomal membranes. Interacts (GTP-bound form) with RAB11FIP1 (via its C-terminus); the interactions doesn't mediate RAB11FIP1 rectruitment to membranes. Interacts with RAB11FIP2. Mg(2+) is required as a cofactor.

Its subcellular location is the recycling endosome. It is found in the early endosome membrane. The protein localises to the golgi apparatus membrane. The protein resides in the golgi apparatus. It localises to the trans-Golgi network membrane. Its subcellular location is the cytoplasmic vesicle. It is found in the phagosome. The catalysed reaction is GTP + H2O = GDP + phosphate + H(+). Its activity is regulated as follows. Regulated by guanine nucleotide exchange factors (GEFs) including DENND6A and DENND6B which promote the exchange of bound GDP for free GTP. Regulated by GTPase activating proteins (GAPs) which increase the GTP hydrolysis activity. Inhibited by GDP dissociation inhibitors (GDIs) which prevent Rab-GDP dissociation. Its function is as follows. The small GTPases Rab are key regulators of intracellular membrane trafficking, from the formation of transport vesicles to their fusion with membranes. Rabs cycle between an inactive GDP-bound form and an active GTP-bound form that is able to recruit to membranes different set of downstream effectors directly responsible for vesicle formation, movement, tethering and fusion. Involved in membrane trafficking between the Golgi complex and endosomes during early embryonic development. Regulates the Golgi to endosome transport of FGFR-containing vesicles during early development, a key process for developing basement membrane and epiblast and primitive endoderm lineages during early postimplantation development. May act by modulating the kinesin KIF16B-cargo association to endosomes. Regulates, together with its guanine nucleotide exchange factor DENND6A, the specific endocytic transport of ADAM10, N-cadherin/CDH2 shedding and cell-cell adhesion. Mediates endosomal tethering and fusion through the interaction with RUFY1 and RAB4B. Interaction with RAB11FIP1 may function in the process of neurite formation. This chain is Ras-related protein Rab-14 (RAB14), found in Sus scrofa (Pig).